A 322-amino-acid polypeptide reads, in one-letter code: Ribonucleoside-diphosphate reductase small subunit (322 aa).

The Fe cation site is built by aspartate 70, glutamate 101, and histidine 104. Residue tyrosine 108 is part of the active site. Fe cation contacts are provided by glutamate 163, glutamate 197, and histidine 200.

It belongs to the ribonucleoside diphosphate reductase small chain family. Heterodimer of a large and a small subunit. The cofactor is Fe cation.

It catalyses the reaction a 2'-deoxyribonucleoside 5'-diphosphate + [thioredoxin]-disulfide + H2O = a ribonucleoside 5'-diphosphate + [thioredoxin]-dithiol. Its function is as follows. Provides the precursors necessary for DNA synthesis. Catalyzes the biosynthesis of deoxyribonucleotides from the corresponding ribonucleotides. The protein is Ribonucleoside-diphosphate reductase small subunit (RNR2) of Plasmodium falciparum (isolate FCR-3 / Gambia).